A 434-amino-acid chain; its full sequence is Putative MgpC-like protein MPN_149 (434 aa).

Disordered regions lie at residues 168–193 (GSGQ…PKAV) and 215–267 (EPLD…DNNG). The span at 170–184 (GQESSWNSQRSQKVL) shows a compositional bias: polar residues. The span at 218–229 (DSTKDGKGKDES) shows a compositional bias: basic and acidic residues. The segment covering 248–267 (STGSQMAAVTDSQQSGDNNG) has biased composition (polar residues).

The protein belongs to the MgpC family.

This chain is Putative MgpC-like protein MPN_149, found in Mycoplasma pneumoniae (strain ATCC 29342 / M129 / Subtype 1) (Mycoplasmoides pneumoniae).